Here is a 196-residue protein sequence, read N- to C-terminus: ATP-dependent Clp protease proteolytic subunit 1 (196 aa).

Residue S96 is the Nucleophile of the active site. The active site involves H121.

It belongs to the peptidase S14 family. As to quaternary structure, fourteen ClpP subunits assemble into 2 heptameric rings which stack back to back to give a disk-like structure with a central cavity, resembling the structure of eukaryotic proteasomes.

The protein resides in the cytoplasm. It catalyses the reaction Hydrolysis of proteins to small peptides in the presence of ATP and magnesium. alpha-casein is the usual test substrate. In the absence of ATP, only oligopeptides shorter than five residues are hydrolyzed (such as succinyl-Leu-Tyr-|-NHMec, and Leu-Tyr-Leu-|-Tyr-Trp, in which cleavage of the -Tyr-|-Leu- and -Tyr-|-Trp bonds also occurs).. Functionally, cleaves peptides in various proteins in a process that requires ATP hydrolysis. Has a chymotrypsin-like activity. Plays a major role in the degradation of misfolded proteins. The polypeptide is ATP-dependent Clp protease proteolytic subunit 1 (Prochlorococcus marinus (strain NATL2A)).